A 353-amino-acid chain; its full sequence is MTIALGRFSKEENDLFDIMDDWLRRDRFVFVGWSGLLLFPCAYFALGGWFTGTTFVTSWYTHGLASSYLEGCNFLTAAVSTPANSLAHSLLLLWGPEAQGDFTRWCQLGGLWTFVALHGAFGLIGFMLRQFELARSVQLRPYNAIAFSAPIAVFVSVFLIYPLGQSGWFFAPSFGVAAIFRFILFFQGFHNWTLNPFHMMGVAGVLGAALLCAIHGATVENTLFEDGDGANTFRAFNPTQAEETYSMVTANRFWSQIFGVAFSNKRWLHFFMLFVPVTGLWMSALGVVGLALNLRAYDFVSQEIRAAEDPEFETFYTKNILLNEGIRAWMAAQDQPHENLIFPEEVLPRGNAL.

The residue at position 2 (Thr2) is an N-acetylthreonine. Position 2 is a phosphothreonine (Thr2). Residues Cys41–Thr61 form a helical membrane-spanning segment. Residue His118 participates in chlorophyll a binding. The helical transmembrane segment at Gly125 to Pro141 threads the bilayer. Gln130 and Asn143 together coordinate pheophytin a. A helical transmembrane segment spans residues Val153–Ser166. His198 contacts chlorophyll a. A helical membrane pass occupies residues Ala208 to Asp228. Residues His215 and Phe262 each coordinate a plastoquinone. His215 serves as a coordination point for Fe cation. A Fe cation-binding site is contributed by His269. Residues Gly279–Arg295 form a helical membrane-spanning segment.

It belongs to the reaction center PufL/M/PsbA/D family. In terms of assembly, PSII is composed of 1 copy each of membrane proteins PsbA, PsbB, PsbC, PsbD, PsbE, PsbF, PsbH, PsbI, PsbJ, PsbK, PsbL, PsbM, PsbT, PsbX, PsbY, PsbZ, Psb30/Ycf12, at least 3 peripheral proteins of the oxygen-evolving complex and a large number of cofactors. It forms dimeric complexes. The cofactor is The D1/D2 heterodimer binds P680, chlorophylls that are the primary electron donor of PSII, and subsequent electron acceptors. It shares a non-heme iron and each subunit binds pheophytin, quinone, additional chlorophylls, carotenoids and lipids. There is also a Cl(-1) ion associated with D1 and D2, which is required for oxygen evolution. The PSII complex binds additional chlorophylls, carotenoids and specific lipids..

It is found in the plastid. Its subcellular location is the chloroplast thylakoid membrane. It catalyses the reaction 2 a plastoquinone + 4 hnu + 2 H2O = 2 a plastoquinol + O2. In terms of biological role, photosystem II (PSII) is a light-driven water:plastoquinone oxidoreductase that uses light energy to abstract electrons from H(2)O, generating O(2) and a proton gradient subsequently used for ATP formation. It consists of a core antenna complex that captures photons, and an electron transfer chain that converts photonic excitation into a charge separation. The D1/D2 (PsbA/PsbD) reaction center heterodimer binds P680, the primary electron donor of PSII as well as several subsequent electron acceptors. D2 is needed for assembly of a stable PSII complex. The chain is Photosystem II D2 protein from Amborella trichopoda.